The following is a 386-amino-acid chain: Demethylsterigmatocystin 6-O-methyltransferase (386 aa).

137–150 serves as a coordination point for substrate; it reads FDISGPCTQILPDF. Residues 177-197 are substrate binding; that stretch reads MFEWMPQHPKHMESLGHLMAL. S-adenosyl-L-methionine is bound by residues 228-229, D253, 273-274, and R289; these read GG and NF. H293 functions as the Proton acceptor in the catalytic mechanism.

It belongs to the class I-like SAM-binding methyltransferase superfamily. Cation-independent O-methyltransferase family. COMT subfamily.

The enzyme catalyses 6-demethylsterigmatocystin + S-adenosyl-L-methionine = sterigmatocystin + S-adenosyl-L-homocysteine + H(+). The protein operates within mycotoxin biosynthesis; aflatoxin biosynthesis. Functionally, demethylsterigmatocystin 6-O-methyltransferase; part of the gene cluster that mediates the biosynthesis of aflatoxins, a group of polyketide-derived furanocoumarins, and part of the most toxic and carcinogenic compounds among the known mycotoxins. The four major aflatoxins produced by A.parasiticus are aflatoxin B1 (AFB1), aflatoxin B2 (AFB2), aflatoxin G1 (AFG1) and aflatoxin G2 (AFG2). Within the aflatoxin pathway, the methyltransferase aflO then catalyzes the modification of demethylsterigmatocystin (DMST) to sterigmatocystin (ST), and of dihydrodemethylsterigmatocystin (DMDHST) to dihydrosterigmatocystin (DHST). The biosynthesis of aflatoxins begins with the norsolorinic acid synthase aflC that combines a hexanoyl starter unit produced by the fatty acid synthase aflA/aflB and 7 malonyl-CoA extender units to synthesize the precursor NOR. The second step is the conversion of NOR to averantin and requires the norsolorinic acid ketoreductase aflD, which catalyzes the dehydration of norsolorinic acid to form (1'S)-averantin. The norsolorinic acid reductases aflE and aflF may also play a role in the conversion of NOR to AVN. The cytochrome P450 monooxygenase aflG then catalyzes the hydroxylation of AVN to 5'hydroxyaverantin (HAVN). The next step is performed by the 5'-hydroxyaverantin dehydrogenase aflH that transforms HAVN to 5'-oxoaverantin (OAVN) which is further converted to averufin (AVF) by aflK that plays a dual role in the pathway, as a 5'-oxoaverantin cyclase that mediates conversion of 5'-oxoaverantin, as well as a versicolorin B synthase in a later step in the pathway. The averufin oxidase aflI catalyzes the conversion of AVF to versiconal hemiacetal acetate (VHA). VHA is then the substrate for the versiconal hemiacetal acetate esterase aflJ to yield versiconal (VAL). Versicolorin B synthase aflK then converts VAL to versicolorin B (VERB) by closing the bisfuran ring of aflatoxin which is required for DNA-binding, thus giving to aflatoxin its activity as a mutagen. Then, the activity of the versicolorin B desaturase aflL leads to versicolorin A (VERA). A branch point starts from VERB since it can also be converted to dihydrodemethylsterigmatocystin (DMDHST), probably also by aflL, VERA being a precursor for aflatoxins B1 and G1, and DMDHST for aflatoxins B2 and G2. Next, the versicolorin reductase aflM and the cytochrome P450 monooxygenase aflN are involved in conversion of VERA to demethylsterigmatocystin (DMST). AflX and aflY seem also involved in this step, through probable aflX-mediated epoxide ring-opening step following versicolorin A oxidation and aflY-mediated Baeyer-Villiger oxidation required for the formation of the xanthone ring. The methyltransferase aflO then leads to the modification of DMST to sterigmatocystin (ST), and of DMDHST to dihydrosterigmatocystin (DHST). Both ST and DHST are then substrates of the O-methyltransferase aflP to yield O-methylsterigmatocystin (OMST) and dihydro-O-methylsterigmatocystin (DHOMST), respectively. Finally OMST is converted to aflatoxins B1 and G1, and DHOMST to aflatoxins B2 and G2, via the action of several enzymes including O-methylsterigmatocystin oxidoreductase aflQ, the cytochrome P450 monooxygenase aflU, but also the NADH-dependent flavin oxidoreductase nadA which is specifically required for the synthesis of AFG1. The chain is Demethylsterigmatocystin 6-O-methyltransferase from Aspergillus parasiticus (strain ATCC 56775 / NRRL 5862 / SRRC 143 / SU-1).